The chain runs to 767 residues: Golgin subfamily A member 1 (767 aa).

The disordered stretch occupies residues 13–58; the sequence is TAVAQRPGGATRIPRSVSKESVASMGADSGDDFASDGSSSREDLSS. S30, S36, S41, S47, S50, and S51 each carry phosphoserine. Residues 50 to 657 are a coiled coil; the sequence is SSSREDLSSQ…RKTLQKELKI (608 aa). Residues 688 to 737 form the GRIP domain; the sequence is TDAREINFEYLKHVVLKFMSCRESEAFHLIKAVSVLLNFSQEEENMLKET. The disordered stretch occupies residues 748 to 767; the sequence is KPAPKGSIRPSISNPRIPWS.

As to quaternary structure, interacts with RAB6A. Directly interacts with TBC1D23. Interacts with FAM91A1; this interaction may be mediated by TBC1D23. Interacts with ARL1; this interaction recruits Golgin-97/GOLGA1 onto the Golgi apparatus. MARylated by PARP12; MARylation is required for basolateral export of E-Cadherin.

Its subcellular location is the golgi apparatus membrane. It is found in the golgi apparatus. The protein localises to the trans-Golgi network membrane. It localises to the cytoplasmic vesicle. The protein resides in the secretory vesicle. Its subcellular location is the acrosome. Involved in vesicular trafficking at the Golgi apparatus level. Involved in endosome-to-Golgi trafficking. Mechanistically, captures transport vesicles arriving from endosomes via the protein TBC1D23. Recognized vesicles are then tethered to the trans-Golgi before subsequent SNARE engagement and vesicle fusion. Selectively regulates E-cadherin transport from the trans-Golgi network in tubulovesicular carriers. In terms of biological role, (Microbial infection) Plays an important role in poxvirus morphogenesis. Translocates into the viral factories where it may transport the membrane fragments and associated protein factors important for virus maturation to the sites of virion assembly. This chain is Golgin subfamily A member 1 (GOLGA1), found in Homo sapiens (Human).